The sequence spans 175 residues: Apoptosis regulator Bcl-2 homolog (175 aa).

A helical transmembrane segment spans residues 152–174 (YYVTRYFRVAAFIITSLAVINLF).

Interacts with host BAK1 and BAX as well as other BH3-containing proteins including BIM, BID or PUMA.

It is found in the host membrane. In terms of biological role, plays a role in the inhibition of host apoptosis. Interacts with host proapoptotic factors BAK1 and BAX to supposedly prevent their activation. The sequence is that of Apoptosis regulator Bcl-2 homolog (CNPV058) from Canarypox virus (CNPV).